Reading from the N-terminus, the 457-residue chain is ATP synthase subunit beta (457 aa).

147–154 (GGAGVGKT) contributes to the ATP binding site.

This sequence belongs to the ATPase alpha/beta chains family. As to quaternary structure, F-type ATPases have 2 components, CF(1) - the catalytic core - and CF(0) - the membrane proton channel. CF(1) has five subunits: alpha(3), beta(3), gamma(1), delta(1), epsilon(1). CF(0) has three main subunits: a(1), b(2) and c(9-12). The alpha and beta chains form an alternating ring which encloses part of the gamma chain. CF(1) is attached to CF(0) by a central stalk formed by the gamma and epsilon chains, while a peripheral stalk is formed by the delta and b chains.

It localises to the cell inner membrane. It catalyses the reaction ATP + H2O + 4 H(+)(in) = ADP + phosphate + 5 H(+)(out). Its function is as follows. Produces ATP from ADP in the presence of a proton gradient across the membrane. The catalytic sites are hosted primarily by the beta subunits. In Histophilus somni (strain 129Pt) (Haemophilus somnus), this protein is ATP synthase subunit beta.